The sequence spans 250 residues: MNREQSGKTLVLIPARMASTRLPGKPLADICGLPMIVQVARRAAEAEVGRIVVAVDHPDVFAAVTGAGFEAIMTRVDHQSGSDRIHEALLKADPHGEAEIVINVQGDLPTIEPGPIRAALKPLENPATDIATLTVAITDEHEKTNPNVVKVVGSPLSDSRFRALYFTRATAPYGEGPLYHHIGLYAYRRKALETFVSLKPSTLEKRESLEQLRALEAGMRIDVEVVDSVPLGVDTPADLDKARRILSARV.

This sequence belongs to the KdsB family.

It localises to the cytoplasm. The catalysed reaction is 3-deoxy-alpha-D-manno-oct-2-ulosonate + CTP = CMP-3-deoxy-beta-D-manno-octulosonate + diphosphate. It functions in the pathway nucleotide-sugar biosynthesis; CMP-3-deoxy-D-manno-octulosonate biosynthesis; CMP-3-deoxy-D-manno-octulosonate from 3-deoxy-D-manno-octulosonate and CTP: step 1/1. Its pathway is bacterial outer membrane biogenesis; lipopolysaccharide biosynthesis. Activates KDO (a required 8-carbon sugar) for incorporation into bacterial lipopolysaccharide in Gram-negative bacteria. This Rhizobium meliloti (strain 1021) (Ensifer meliloti) protein is 3-deoxy-manno-octulosonate cytidylyltransferase.